We begin with the raw amino-acid sequence, 126 residues long: Ribonuclease P protein component (126 aa).

Belongs to the RnpA family. In terms of assembly, consists of a catalytic RNA component (M1 or rnpB) and a protein subunit.

The catalysed reaction is Endonucleolytic cleavage of RNA, removing 5'-extranucleotides from tRNA precursor.. RNaseP catalyzes the removal of the 5'-leader sequence from pre-tRNA to produce the mature 5'-terminus. It can also cleave other RNA substrates such as 4.5S RNA. The protein component plays an auxiliary but essential role in vivo by binding to the 5'-leader sequence and broadening the substrate specificity of the ribozyme. In Rhodococcus erythropolis (strain PR4 / NBRC 100887), this protein is Ribonuclease P protein component.